Reading from the N-terminus, the 286-residue chain is Phosphatidylserine decarboxylase proenzyme (286 aa).

Residues D90, H147, and S250 each act as charge relay system; for autoendoproteolytic cleavage activity in the active site. The active-site Schiff-base intermediate with substrate; via pyruvic acid; for decarboxylase activity is S250. S250 is modified (pyruvic acid (Ser); by autocatalysis).

It belongs to the phosphatidylserine decarboxylase family. PSD-B subfamily. Prokaryotic type I sub-subfamily. In terms of assembly, heterodimer of a large membrane-associated beta subunit and a small pyruvoyl-containing alpha subunit. It depends on pyruvate as a cofactor. Post-translationally, is synthesized initially as an inactive proenzyme. Formation of the active enzyme involves a self-maturation process in which the active site pyruvoyl group is generated from an internal serine residue via an autocatalytic post-translational modification. Two non-identical subunits are generated from the proenzyme in this reaction, and the pyruvate is formed at the N-terminus of the alpha chain, which is derived from the carboxyl end of the proenzyme. The autoendoproteolytic cleavage occurs by a canonical serine protease mechanism, in which the side chain hydroxyl group of the serine supplies its oxygen atom to form the C-terminus of the beta chain, while the remainder of the serine residue undergoes an oxidative deamination to produce ammonia and the pyruvoyl prosthetic group on the alpha chain. During this reaction, the Ser that is part of the protease active site of the proenzyme becomes the pyruvoyl prosthetic group, which constitutes an essential element of the active site of the mature decarboxylase.

Its subcellular location is the cell membrane. The catalysed reaction is a 1,2-diacyl-sn-glycero-3-phospho-L-serine + H(+) = a 1,2-diacyl-sn-glycero-3-phosphoethanolamine + CO2. It functions in the pathway phospholipid metabolism; phosphatidylethanolamine biosynthesis; phosphatidylethanolamine from CDP-diacylglycerol: step 2/2. Its function is as follows. Catalyzes the formation of phosphatidylethanolamine (PtdEtn) from phosphatidylserine (PtdSer). This chain is Phosphatidylserine decarboxylase proenzyme, found in Saccharophagus degradans (strain 2-40 / ATCC 43961 / DSM 17024).